The primary structure comprises 240 residues: Insulin-like growth factor-binding protein 3 receptor (240 aa).

The first 38 residues, 1 to 38 (MGNCQAGHNLHLCLAHHPPLVCATLILLLLGLSGLGLG), serve as a signal peptide directing secretion. Residues 39–204 (SFLLTHRTGL…SEELALCGSR (166 aa)) lie on the Extracellular side of the membrane. N-linked (GlcNAc...) asparagine glycans are attached at residues N73, N101, and N167. Residues 205 to 225 (LLVLGSFLLLFCGLLCCVTAM) traverse the membrane as a helical segment. At 226–240 (CFHPRRESHWSRTRL) the chain is on the cytoplasmic side.

Interacts with IGFBP3. Interacts with CASP8. As to expression, widely expressed in normal tissues but suppressed in prostate and breast tumor.

It localises to the cell membrane. In terms of biological role, cell death receptor specific for IGFBP3, may mediate caspase-8-dependent apoptosis upon ligand binding. This is Insulin-like growth factor-binding protein 3 receptor (TMEM219) from Homo sapiens (Human).